The chain runs to 952 residues: Translation initiation factor IF-2 (952 aa).

4 disordered regions span residues 74-95, 153-204, 230-256, and 273-319; these read QRRLSRLEEQSRKTYEKERQLK, AAQA…KEEP, MHSPFDRSSEAERKKKNRKKNFKEQAD, and DEKG…DVND. Low complexity predominate over residues 153-168; that stretch reads AAQADQTDQTDQTDQA. A compositionally biased stretch (basic and acidic residues) spans 232 to 242; it reads SPFDRSSEAER. Low complexity predominate over residues 286 to 303; the sequence is PGETNAATPAGTASTAGA. The 171-residue stretch at 449-619 folds into the tr-type G domain; that stretch reads IRPPVITIMG…LAEAEIRELK (171 aa). Residues 458–465 form a G1 region; that stretch reads GHVDHGKT. 458-465 serves as a coordination point for GTP; that stretch reads GHVDHGKT. The G2 stretch occupies residues 483–487; that stretch reads GITQH. The segment at 505–508 is G3; sequence DTPG. GTP-binding positions include 505-509 and 559-562; these read DTPGH and NKVD. The G4 stretch occupies residues 559 to 562; that stretch reads NKVD. The tract at residues 595–597 is G5; it reads SAK.

This sequence belongs to the TRAFAC class translation factor GTPase superfamily. Classic translation factor GTPase family. IF-2 subfamily.

It localises to the cytoplasm. In terms of biological role, one of the essential components for the initiation of protein synthesis. Protects formylmethionyl-tRNA from spontaneous hydrolysis and promotes its binding to the 30S ribosomal subunits. Also involved in the hydrolysis of GTP during the formation of the 70S ribosomal complex. The protein is Translation initiation factor IF-2 of Chlorobium limicola (strain DSM 245 / NBRC 103803 / 6330).